The chain runs to 803 residues: Bromodomain-containing protein 2 (803 aa).

Met1 carries the post-translational modification N-acetylmethionine. The segment at 1–28 (MLQNVTPHSKLPGEGNAGLLGLGPEAAA) is disordered. Thr6 carries the post-translational modification Phosphothreonine. Phosphoserine is present on Ser37. Residues 53 to 73 (ALQLTPANPPPPEVSNPKKPG) form a disordered region. The Bromo 1 domain maps to 74–180 (RVTNQLQYLH…KIFLQKVASM (107 aa)). A protein-binding residues include Asp112, Tyr155, Asn156, Lys157, Asp160, and Asp161. Disordered regions lie at residues 268-349 (PPAQ…LSEQ), 456-653 (EPLE…RQLS), and 739-803 (EKRL…SDSG). The segment covering 285–298 (TTTPTPTAILAPGS) has biased composition (low complexity). Phosphoserine occurs at positions 298, 301, and 305. A compositionally biased stretch (basic and acidic residues) spans 316–332 (MRRESGRPIKPPRKDLP). In terms of domain architecture, Bromo 2 spans 344-453 (GKLSEQLKHC…DVFEFRYAKM (110 aa)). Residues 481 to 515 (SSEESSSESSSEEDEEEDEEEEEEEEESESSDSEE) are compositionally biased toward acidic residues. Residues 545 to 567 (KPKRKREKKEKKKKRKAEKHRGR) are compositionally biased toward basic residues. The Nuclear localization signal motif lies at 556-560 (KKKRK). Residues 634–716 (DSEEEEESRP…SCLRKKPRKP (83 aa)) form the NET domain. Phosphoserine is present on Ser635. Residues 641–652 (SRPMSYDEKRQL) are compositionally biased toward basic and acidic residues. Low complexity predominate over residues 777-797 (SASSSSSDSSSSSSSSSSSDT).

The protein belongs to the BET family. In terms of assembly, homodimer. Interacts with E2F1. Interacts with (acetylated) STAT3; promoting STAT3 recruitment to chromatin. Interacts with CTCF; promoting BRD2 recruitment to chromatin.

The protein resides in the nucleus. Its subcellular location is the chromosome. Its function is as follows. Chromatin reader protein that specifically recognizes and binds histone H4 acetylated at 'Lys-5' and 'Lys-12' (H4K5ac and H4K12ac, respectively), thereby controlling gene expression and remodeling chromatin structures. Recruits transcription factors and coactivators to target gene sites, and activates RNA polymerase II machinery for transcriptional elongation. Plays a key role in genome compartmentalization via its association with CTCF and cohesin: recruited to chromatin by CTCF and promotes formation of topologically associating domains (TADs) via its ability to bind acetylated histones, contributing to CTCF boundary formation and enhancer insulation. Also recognizes and binds acetylated non-histone proteins, such as STAT3. Involved in inflammatory response by regulating differentiation of naive CD4(+) T-cells into T-helper Th17: recognizes and binds STAT3 acetylated at 'Lys-87', promoting STAT3 recruitment to chromatin. In addition to acetylated lysines, also recognizes and binds lysine residues on histones that are both methylated and acetylated on the same side chain to form N6-acetyl-N6-methyllysine (Kacme), an epigenetic mark of active chromatin associated with increased transcriptional initiation. Specifically binds histone H4 acetyl-methylated at 'Lys-5' and 'Lys-12' (H4K5acme and H4K12acme, respectively). The polypeptide is Bromodomain-containing protein 2 (BRD2) (Canis lupus familiaris (Dog)).